A 304-amino-acid chain; its full sequence is MSASYWDSSQRHKWKYTRESLAKEKQKLWLLECQLFPQGLNVTIHDSKANKQVTTNIPVTQRDLHYDRDYNLRIYCYFLIMKLGRRLNIRQCALVTAHVYLSRFLLRASVREVNLYLLITTCIYLACKVEECPQHIRTLVNEARSLWPEFIPPDVTKVTEFEFYLIEELQSYLIVHHPYRSLEQIEKALSSEKYNYKLSDDELQKIWSLINDSYTTDVHLLYSPHVIAISCLFAVSCIIHKPEDSTKRANINMFIAETQVNLEQVMFILQELISLYDHWDKYNELRIRALLHELYLRQQTPAIQ.

The region spanning 43–174 is the Cyclin N-terminal domain; it reads TIHDSKANKQ…LIEELQSYLI (132 aa).

Belongs to the cyclin family. Cyclin C subfamily. Component of the SRB8-11 complex, a regulatory module of the Mediator complex.

It is found in the nucleus. In terms of biological role, component of the SRB8-11 complex. The SRB8-11 complex is a regulatory module of the Mediator complex which is itself involved in regulation of basal and activated RNA polymerase II-dependent transcription. The SRB8-11 complex may be involved in the transcriptional repression of a subset of genes regulated by Mediator. It may inhibit the association of the Mediator complex with RNA polymerase II to form the holoenzyme complex. The SRB8-11 complex phosphorylates the C-terminal domain (CTD) of the largest subunit of RNA polymerase II. The protein is RNA polymerase II holoenzyme cyclin-like subunit (SSN8) of Kluyveromyces lactis (strain ATCC 8585 / CBS 2359 / DSM 70799 / NBRC 1267 / NRRL Y-1140 / WM37) (Yeast).